The chain runs to 211 residues: Pyridoxine/pyridoxamine 5'-phosphate oxidase (211 aa).

Substrate is bound by residues 7–10 (RREY) and Lys-65. Residues 60 to 65 (RIVLLK), 75 to 76 (FT), Lys-82, and Gln-104 each bind FMN. The substrate site is built by Tyr-122, Arg-126, and Ser-130. FMN is bound by residues 139-140 (QS) and Trp-184. Residue 190–192 (RLH) coordinates substrate. Arg-194 provides a ligand contact to FMN.

The protein belongs to the pyridoxamine 5'-phosphate oxidase family. As to quaternary structure, homodimer. It depends on FMN as a cofactor.

The catalysed reaction is pyridoxamine 5'-phosphate + O2 + H2O = pyridoxal 5'-phosphate + H2O2 + NH4(+). It catalyses the reaction pyridoxine 5'-phosphate + O2 = pyridoxal 5'-phosphate + H2O2. Its pathway is cofactor metabolism; pyridoxal 5'-phosphate salvage; pyridoxal 5'-phosphate from pyridoxamine 5'-phosphate: step 1/1. The protein operates within cofactor metabolism; pyridoxal 5'-phosphate salvage; pyridoxal 5'-phosphate from pyridoxine 5'-phosphate: step 1/1. Catalyzes the oxidation of either pyridoxine 5'-phosphate (PNP) or pyridoxamine 5'-phosphate (PMP) into pyridoxal 5'-phosphate (PLP). The polypeptide is Pyridoxine/pyridoxamine 5'-phosphate oxidase (Teredinibacter turnerae (strain ATCC 39867 / T7901)).